Reading from the N-terminus, the 380-residue chain is Calreticulin-3 (380 aa).

An N-terminal signal peptide occupies residues 1 to 19; the sequence is MVSARALLWAICVLRVALA. An N-domain region spans residues 20-197; sequence TVYFQEEFLD…GQSIESGSIE (178 aa). The N-linked (GlcNAc...) asparagine glycan is linked to Asn-42. Residues Tyr-109, Lys-111, Tyr-128, and Asp-135 each coordinate an alpha-D-glucoside. Cys-137 and Cys-163 are oxidised to a cystine. 7 consecutive repeat copies span residues 191-202, 209-220, 222-231, 235-246, 250-256, 260-268, and 270-280. The 4 X approximate repeats stretch occupies residues 191-246; the sequence is IESGSIEYDWNLTSLRKTEKTSLDSRDWDQVEGSKVQDWEKHFLDAGASKPSDWNS. Positions 198-291 are P-domain; it reads YDWNLTSLRK…YLTQYDLSEF (94 aa). Asn-201 carries an N-linked (GlcNAc...) asparagine glycan. The tract at residues 250 to 280 is 3 X approximate repeats; that stretch reads GDWLQKPPYEDGLKAEGIDKDVWLHQKMRPA. The interval 292–380 is C-domain; it reads ENIGAIGLEL…FSRFHRQGEL (89 aa). Residue Glu-300 coordinates an alpha-D-glucoside. The Prevents secretion from ER motif lies at 377–380; that stretch reads QGEL.

It belongs to the calreticulin family. In terms of assembly, component of an EIF2 complex at least composed of CELF1/CUGBP1, CALR, CALR3, EIF2S1, EIF2S2, HSP90B1 and HSPA5. As to expression, testis specific, absent in mature sperm.

The protein resides in the endoplasmic reticulum lumen. Its function is as follows. CALR3 capacity for calcium-binding may be absent or much lower than that of CALR. During spermatogenesis, may act as a lectin-independent chaperone for specific client proteins such as ADAM3. Required for sperm fertility. This Mus musculus (Mouse) protein is Calreticulin-3 (Calr3).